The primary structure comprises 167 residues: Menaquinol:cytochrome c reductase iron-sulfur subunit (167 aa).

The Rieske domain maps to 59–158 (TKEPQRFDFK…QEVKDGFLYL (100 aa)). Residues cysteine 100, histidine 102, cysteine 121, and histidine 124 each contribute to the [2Fe-2S] cluster site. An intrachain disulfide couples cysteine 105 to cysteine 123.

Belongs to the Rieske iron-sulfur protein family. As to quaternary structure, the main subunits of the menaquinol:cytochrome c complex are a Rieske-type iron-sulfur protein (QcrA), a cytochrome b (QcrB) and a cytochrome c (QcrC). [2Fe-2S] cluster serves as cofactor.

Functionally, component of the menaquinol:cytochrome c reductase complex. The Rieske protein is a high potential 2Fe-2S protein. The polypeptide is Menaquinol:cytochrome c reductase iron-sulfur subunit (qcrA) (Bacillus subtilis (strain 168)).